A 1407-amino-acid chain; its full sequence is DNA-directed RNA polymerase subunit beta' (1407 aa).

Zn(2+) is bound by residues cysteine 70, cysteine 72, cysteine 85, and cysteine 88. Mg(2+) contacts are provided by aspartate 460, aspartate 462, and aspartate 464. 4 residues coordinate Zn(2+): cysteine 814, cysteine 888, cysteine 895, and cysteine 898. The residue at position 972 (lysine 972) is an N6-acetyllysine.

It belongs to the RNA polymerase beta' chain family. In terms of assembly, the RNAP catalytic core consists of 2 alpha, 1 beta, 1 beta' and 1 omega subunit. When a sigma factor is associated with the core the holoenzyme is formed, which can initiate transcription. Mg(2+) serves as cofactor. Zn(2+) is required as a cofactor.

It catalyses the reaction RNA(n) + a ribonucleoside 5'-triphosphate = RNA(n+1) + diphosphate. DNA-dependent RNA polymerase catalyzes the transcription of DNA into RNA using the four ribonucleoside triphosphates as substrates. In Shigella sonnei (strain Ss046), this protein is DNA-directed RNA polymerase subunit beta'.